A 599-amino-acid chain; its full sequence is Elongation factor 4 (599 aa).

One can recognise a tr-type G domain in the interval 5 to 187 (SHIRNFSIIA…ELVRLVPPPT (183 aa)). GTP-binding positions include 17-22 (DHGKST) and 134-137 (NKMD).

This sequence belongs to the TRAFAC class translation factor GTPase superfamily. Classic translation factor GTPase family. LepA subfamily.

It localises to the cell inner membrane. It catalyses the reaction GTP + H2O = GDP + phosphate + H(+). Its function is as follows. Required for accurate and efficient protein synthesis under certain stress conditions. May act as a fidelity factor of the translation reaction, by catalyzing a one-codon backward translocation of tRNAs on improperly translocated ribosomes. Back-translocation proceeds from a post-translocation (POST) complex to a pre-translocation (PRE) complex, thus giving elongation factor G a second chance to translocate the tRNAs correctly. Binds to ribosomes in a GTP-dependent manner. The protein is Elongation factor 4 of Cellvibrio japonicus (strain Ueda107) (Pseudomonas fluorescens subsp. cellulosa).